Consider the following 1157-residue polypeptide: MSLFGVGFLASAKGKRVCAIGRSSLGKISDPLEVPNLLDLQLDSFDWLIGGPRWRVALDAYRKNPSGAPIAEKSGLDEVFDEISPIEDSAGNMQLNFSKPVLEAEELSVRECRVRGRTYSAPLYVEAEFMNHDTGEIKTQTVFMGDFPLMTDKGTFVINGTERVVVSQLVRSPGVYFERTPEKNSEKDLFSGRIIPARGAWLEFEVDRHDQLGVRVDRKRRQPVIFFLRAIGMTDDEIRDAFGEFESISVQHEKNIGLSRDDALREIYRRVRPGEQASAEAGRALLENFYFTSRRFDLARVGRYKVNRKLGVDVDPTRMVLTRSDIIATIRYLAALHLGFSEVAVLNSNKSVPISTDDIDHLGNRRIRPVGELVQNQLRAGLARMERVVRERMTTQDIEAIIPQTLINVMPIVAALKEFYGTSQLSQFMDQNNPLAGLTHKRRLSALGPGGLSRERAGVEVRDVNPSHYGRMCPIETPEGPNIGLIGSLACYSRVNSFGFIETPYRRVVNGKVTDDIEYMTATQEDEHAIAQASTPLRPDNSFVDERVLVRRKGGEVEVVPADQVDYMDVSGRQMVSVATSLIPFLEHNDANRALMGSNMQRQAVPLLVTESPLVGTGMERYVAIDAGDVLIAEDPGIVGDVSADVVTVKQDDGKHRDYHVGKFVRSNQGNCYNQRVVVRSGDRVEKGTVLADGPCTDKGELSLGRNLLVAFMPWEGYNFEDAIIISQNLVKDDTLSSIHIEEHEVSTRDTKLGSEEITRDLPNVSMDYIKDLDERGIIRIGAEVGPGDILVGKVTPKGETELSAEERLLRAIFNEKSMEVRDTSLKVPHGQQGTVIDVKLFDAVDGEDKLGAGINQRVVVYIAHKRKITEGDKLAGRHGNKGVISKILPVEDMPFMADGTPVDIILNPLGVPARMNFGQVLETHLGWISKQGWKIEGDPDWAKDIRVREAQPDSRVSSPVFDGISEGEITGLFSSVFPNRDGERAVGSDGKAILYDGRTGEPFPEPISVGYMYVLKLHHLVDDKIHARSTGPYSMITQQPLGGKAQFGGQRFGEMEVWALEAYGAAHALQELLTIKSDDVVGRVKVYDAIVKGYPIPTPGVPESFKVIVKEMQSLCINIEVVSDGEDDVSADAETLQIEEGLDTSPKVEVGSLEEV.

It belongs to the RNA polymerase beta chain family. As to quaternary structure, the RNAP catalytic core consists of 2 alpha, 1 beta, 1 beta' and 1 omega subunit. When a sigma factor is associated with the core the holoenzyme is formed, which can initiate transcription.

The catalysed reaction is RNA(n) + a ribonucleoside 5'-triphosphate = RNA(n+1) + diphosphate. In terms of biological role, DNA-dependent RNA polymerase catalyzes the transcription of DNA into RNA using the four ribonucleoside triphosphates as substrates. This Tropheryma whipplei (strain Twist) (Whipple's bacillus) protein is DNA-directed RNA polymerase subunit beta.